We begin with the raw amino-acid sequence, 191 residues long: Pyridoxal 5'-phosphate synthase subunit PdxT (191 aa).

Position 46-48 (46-48) interacts with L-glutamine; the sequence is GES. Cys-78 serves as the catalytic Nucleophile. L-glutamine contacts are provided by residues Arg-105 and 133 to 134; that span reads IR. Catalysis depends on charge relay system residues His-169 and Glu-171.

This sequence belongs to the glutaminase PdxT/SNO family. As to quaternary structure, in the presence of PdxS, forms a dodecamer of heterodimers. Only shows activity in the heterodimer.

It catalyses the reaction aldehydo-D-ribose 5-phosphate + D-glyceraldehyde 3-phosphate + L-glutamine = pyridoxal 5'-phosphate + L-glutamate + phosphate + 3 H2O + H(+). The catalysed reaction is L-glutamine + H2O = L-glutamate + NH4(+). Its pathway is cofactor biosynthesis; pyridoxal 5'-phosphate biosynthesis. Functionally, catalyzes the hydrolysis of glutamine to glutamate and ammonia as part of the biosynthesis of pyridoxal 5'-phosphate. The resulting ammonia molecule is channeled to the active site of PdxS. This Fervidobacterium nodosum (strain ATCC 35602 / DSM 5306 / Rt17-B1) protein is Pyridoxal 5'-phosphate synthase subunit PdxT.